The sequence spans 786 residues: Endonuclease MutS2 (786 aa).

332 to 339 (GPNTGGKT) provides a ligand contact to ATP. A Smr domain is found at 711 to 786 (IDLRGMDSEE…GTGVTVVILK (76 aa)).

It belongs to the DNA mismatch repair MutS family. MutS2 subfamily. In terms of assembly, homodimer. Binds to stalled ribosomes, contacting rRNA.

Functionally, endonuclease that is involved in the suppression of homologous recombination and thus may have a key role in the control of bacterial genetic diversity. Acts as a ribosome collision sensor, splitting the ribosome into its 2 subunits. Detects stalled/collided 70S ribosomes which it binds and splits by an ATP-hydrolysis driven conformational change. Acts upstream of the ribosome quality control system (RQC), a ribosome-associated complex that mediates the extraction of incompletely synthesized nascent chains from stalled ribosomes and their subsequent degradation. Probably generates substrates for RQC. The polypeptide is Endonuclease MutS2 (Clostridium perfringens (strain SM101 / Type A)).